A 166-amino-acid chain; its full sequence is Small ribosomal subunit protein cS23z (166 aa).

This sequence belongs to the chloroplast-specific ribosomal protein cS23 family. As to quaternary structure, part of the 30S ribosomal subunit.

It localises to the plastid. The protein resides in the chloroplast. Component of the chloroplast ribosome (chloro-ribosome), a dedicated translation machinery responsible for the synthesis of chloroplast genome-encoded proteins, including proteins of the transcription and translation machinery and components of the photosynthetic apparatus. The chain is Small ribosomal subunit protein cS23z from Arabidopsis thaliana (Mouse-ear cress).